We begin with the raw amino-acid sequence, 550 residues long: Dihydroxy-acid dehydratase (550 aa).

Asp-78 is a Mg(2+) binding site. Cys-119 is a binding site for [2Fe-2S] cluster. Residues Asp-120 and Lys-121 each contribute to the Mg(2+) site. Lys-121 carries the N6-carboxylysine modification. A [2Fe-2S] cluster-binding site is contributed by Cys-191. Glu-440 provides a ligand contact to Mg(2+). Ser-466 acts as the Proton acceptor in catalysis.

Belongs to the IlvD/Edd family. Homodimer. Requires [2Fe-2S] cluster as cofactor. Mg(2+) serves as cofactor.

The enzyme catalyses (2R)-2,3-dihydroxy-3-methylbutanoate = 3-methyl-2-oxobutanoate + H2O. It carries out the reaction (2R,3R)-2,3-dihydroxy-3-methylpentanoate = (S)-3-methyl-2-oxopentanoate + H2O. The protein operates within amino-acid biosynthesis; L-isoleucine biosynthesis; L-isoleucine from 2-oxobutanoate: step 3/4. It functions in the pathway amino-acid biosynthesis; L-valine biosynthesis; L-valine from pyruvate: step 3/4. Functionally, functions in the biosynthesis of branched-chain amino acids. Catalyzes the dehydration of (2R,3R)-2,3-dihydroxy-3-methylpentanoate (2,3-dihydroxy-3-methylvalerate) into 2-oxo-3-methylpentanoate (2-oxo-3-methylvalerate) and of (2R)-2,3-dihydroxy-3-methylbutanoate (2,3-dihydroxyisovalerate) into 2-oxo-3-methylbutanoate (2-oxoisovalerate), the penultimate precursor to L-isoleucine and L-valine, respectively. In Methanococcus maripaludis (strain C5 / ATCC BAA-1333), this protein is Dihydroxy-acid dehydratase.